A 373-amino-acid polypeptide reads, in one-letter code: 3 beta-hydroxysteroid dehydrogenase/Delta 5--&gt;4-isomerase type 6 (373 aa).

Residue tyrosine 155 is the Proton acceptor of the active site. Residue lysine 159 participates in NAD(+) binding. Residues 288 to 308 (VPLLYWLAFMLETVSFLLSPI) form a helical membrane-spanning segment.

The protein belongs to the 3-beta-HSD family. In terms of tissue distribution, expressed in skin and testis.

It localises to the endoplasmic reticulum membrane. The protein localises to the mitochondrion membrane. The enzyme catalyses a 3beta-hydroxy-Delta(5)-steroid + NAD(+) = a 3-oxo-Delta(5)-steroid + NADH + H(+). The catalysed reaction is a 3-oxo-Delta(5)-steroid = a 3-oxo-Delta(4)-steroid. It functions in the pathway lipid metabolism; steroid biosynthesis. In terms of biological role, 3-beta-HSD is a bifunctional enzyme, that catalyzes the oxidative conversion of Delta(5)-ene-3-beta-hydroxy steroid, and the oxidative conversion of ketosteroids. The 3-beta-HSD enzymatic system plays a crucial role in the biosynthesis of all classes of hormonal steroids. May be involved in local production of progesterone. This Mus musculus (Mouse) protein is 3 beta-hydroxysteroid dehydrogenase/Delta 5--&gt;4-isomerase type 6 (Hsd3b6).